The primary structure comprises 476 residues: MHYHIVGIAGAGMSAIAHILLDQGHTVSGSDLQQNTLTAALEQRGARIRYGHEPAFVGDADRLVATSAVQDEHIELVEARKRGIPVLRRADLWREWSHGRQVVAVAGTHGKTTTTALIALMLTRAGIAPGFLIGGETPDLGVNARWGNPAAPLVVEADEYDRTFLALTPDIAIITNVEWEHVDIYPSPDEYEAAFRTFARQVAHPQRLIVCGDNAGARRVVGHPDAQQYGIEEAIARNPASCRLALMDWMAANVRYDGSMTHFDLWRYDRRTCGTRLEGMYTMRLVGDHNVQNALAAIAAATTLGIDRTAIGAALAEYRGARRRFDIKGEVNGITVIDDYAHHPTEVRATLAAARARFPQHRIVVYLQPHTFSRTYAMLDNWTHAFDAADIVRIGDVYPARETGEPRAAARALAGRIAHPDVEVVGDVATATATITALLQPGDLLLTLGAGDGYRVGEMALLALGQADDQSESSET.

ATP is bound at residue 107 to 113; it reads GTHGKTT.

It belongs to the MurCDEF family.

It localises to the cytoplasm. It catalyses the reaction UDP-N-acetyl-alpha-D-muramate + L-alanine + ATP = UDP-N-acetyl-alpha-D-muramoyl-L-alanine + ADP + phosphate + H(+). It participates in cell wall biogenesis; peptidoglycan biosynthesis. In terms of biological role, cell wall formation. The sequence is that of UDP-N-acetylmuramate--L-alanine ligase from Roseiflexus castenholzii (strain DSM 13941 / HLO8).